A 408-amino-acid polypeptide reads, in one-letter code: E3 ubiquitin-protein ligase At1g12760 (408 aa).

The segment at 1–52 is disordered; that stretch reads MSTETTTGNSSLIPASSSSSSSDAIDPAPLLFNGDDNEGNNGGGGGERRSVR. Positions 10-34 are enriched in low complexity; that stretch reads SSLIPASSSSSSSDAIDPAPLLFNG. Helical transmembrane passes span 100 to 120 and 133 to 153; these read VVVL…AILV and VWLL…CVEY. The segment at 160–195 is disordered; it reads RTNRTTTTTPPRSRSSSSSSSSSSLEEEALGSRRNS. Low complexity predominate over residues 163-183; sequence RTTTTTPPRSRSSSSSSSSSS. 3 helical membrane-spanning segments follow: residues 219 to 239, 254 to 274, and 275 to 295; these read ANTM…SAGG, IVFL…ACVI, and GIAV…VADQ. Residues 353–394 form an RING-type; atypical zinc finger; that stretch reads CCICLSAYEDGTELRELPCGHHFHCSCVDKWLYINATCPLCK.

The protein resides in the membrane. The catalysed reaction is S-ubiquitinyl-[E2 ubiquitin-conjugating enzyme]-L-cysteine + [acceptor protein]-L-lysine = [E2 ubiquitin-conjugating enzyme]-L-cysteine + N(6)-ubiquitinyl-[acceptor protein]-L-lysine.. The protein operates within protein modification; protein ubiquitination. Its function is as follows. Mediates E2-dependent protein ubiquitination in vitro. This Arabidopsis thaliana (Mouse-ear cress) protein is E3 ubiquitin-protein ligase At1g12760.